The sequence spans 638 residues: LIM domain kinase 2 (638 aa).

2 consecutive LIM zinc-binding domains span residues 12 to 63 and 72 to 124; these read CPGC…CPKD and CHGC…CGKC. Residues 152-239 form the PDZ domain; it reads LISMPATTEG…TLQLLIEHDP (88 aa). Phosphothreonine is present on Thr210. The segment at 279-304 is disordered; it reads LRRRSLRRSNSISKSPGPSSPKEPLL. Positions 286–302 are enriched in low complexity; it reads RSNSISKSPGPSSPKEP. 2 positions are modified to phosphoserine: Ser293 and Ser298. One can recognise a Protein kinase domain in the interval 331–608; sequence LIHGEVLGKG…DSFEALSLYL (278 aa). Residues 337 to 345 and Lys360 contribute to the ATP site; that span reads LGKGFFGQA. The active site involves Asp451. Position 505 is a phosphothreonine; by ROCK1 and CDC42BP (Thr505).

The protein belongs to the protein kinase superfamily. TKL Ser/Thr protein kinase family. Interacts with LIMK2b. In terms of assembly, interacts with LIMK2a. As to quaternary structure, binds ROCK1 and MARF1. Interacts with NISCH. In terms of processing, phosphorylated on serine and/or threonine residues by ROCK1.

It is found in the cytoplasm. The protein resides in the cytoskeleton. The protein localises to the spindle. It localises to the microtubule organizing center. Its subcellular location is the centrosome. It is found in the nucleus. The protein resides in the perinuclear region. The catalysed reaction is L-seryl-[protein] + ATP = O-phospho-L-seryl-[protein] + ADP + H(+). It catalyses the reaction L-threonyl-[protein] + ATP = O-phospho-L-threonyl-[protein] + ADP + H(+). Its function is as follows. Serine/threonine-protein kinase that plays an essential role in the regulation of actin filament dynamics. Acts downstream of several Rho family GTPase signal transduction pathways. Involved in astral microtubule organization and mitotic spindle orientation during early stages of mitosis by mediating phosphorylation of TPPP. Displays serine/threonine-specific phosphorylation of myelin basic protein and histone (MBP) in vitro. Suppresses ciliogenesis via multiple pathways; phosphorylation of CFL1, suppression of directional trafficking of ciliary vesicles to the ciliary base, and by facilitating YAP1 nuclear localization where it acts as a transcriptional corepressor of the TEAD4 target genes AURKA and PLK1. The polypeptide is LIM domain kinase 2 (LIMK2) (Homo sapiens (Human)).